The primary structure comprises 499 residues: Hepatic triacylglycerol lipase (499 aa).

An N-terminal signal peptide occupies residues 1–22 (MDTSPLCFSILLVLCIFIQSSA). Residues Asn42 and Asn78 are each glycosylated (N-linked (GlcNAc...) asparagine). Ser168 serves as the catalytic Nucleophile. The Charge relay system role is filled by Asp194. The segment at 254 to 277 (CHFLELYRHIAQHGFNAITQTIKC) is essential for determining substrate specificity. Catalysis depends on His279, which acts as the Charge relay system. The 135-residue stretch at 352–486 (YHYQFKIQFI…RPTQEKIFVK (135 aa)) folds into the PLAT domain. N-linked (GlcNAc...) asparagine glycosylation is found at Asn362 and Asn397.

The protein belongs to the AB hydrolase superfamily. Lipase family. In terms of assembly, homodimer.

The protein resides in the secreted. The enzyme catalyses a triacylglycerol + H2O = a diacylglycerol + a fatty acid + H(+). It catalyses the reaction a 1-acyl-sn-glycero-3-phosphocholine + H2O = sn-glycerol 3-phosphocholine + a fatty acid + H(+). It carries out the reaction a 1,2-diacyl-sn-glycero-3-phosphocholine + H2O = a 2-acyl-sn-glycero-3-phosphocholine + a fatty acid + H(+). The catalysed reaction is 1,2,3-tri-(9Z-octadecenoyl)-glycerol + H2O = di-(9Z)-octadecenoylglycerol + (9Z)-octadecenoate + H(+). The enzyme catalyses 1,2-di-(9Z-octadecenoyl)-sn-glycero-3-phosphocholine + H2O = (9Z-octadecenoyl)-sn-glycero-3-phosphocholine + (9Z)-octadecenoate + H(+). It catalyses the reaction 1,2,3-tributanoylglycerol + H2O = dibutanoylglycerol + butanoate + H(+). It carries out the reaction 1,2-dihexadecanoyl-sn-glycero-3-phosphocholine + H2O = hexadecanoyl-sn-glycero-3-phosphocholine + hexadecanoate + H(+). The catalysed reaction is 1,2-di-(9Z-octadecenoyl)-sn-glycerol + H2O = 2-(9Z-octadecenoyl)-glycerol + (9Z)-octadecenoate + H(+). The enzyme catalyses 1,2,3-tri-(9Z-octadecenoyl)-glycerol + H2O = 2,3-di-(9Z)-octadecenoyl-sn-glycerol + (9Z)-octadecenoate + H(+). It catalyses the reaction 1-(9Z-octadecenoyl)-sn-glycero-3-phospho-L-serine + H2O = sn-glycero-3-phospho-L-serine + (9Z)-octadecenoate + H(+). It carries out the reaction 1-hexadecanoyl-sn-glycero-3-phosphocholine + H2O = sn-glycerol 3-phosphocholine + hexadecanoate + H(+). The catalysed reaction is 1,3-di-(9Z-octadecenoyl)-glycerol + H2O = 3-(9Z-octadecenoyl)-sn-glycerol + (9Z)-octadecenoate + H(+). Phospholipase A1 and triacylglycerol lipase are inhibited by sphingomyelin. Functionally, catalyzes the hydrolysis of triglycerides and phospholipids present in circulating plasma lipoproteins, including chylomicrons, intermediate density lipoproteins (IDL), low density lipoproteins (LDL) of large size and high density lipoproteins (HDL), releasing free fatty acids (FFA) and smaller lipoprotein particles. Also exhibits lysophospholipase activity. Can hydrolyze both neutral lipid and phospholipid substrates but shows a greater binding affinity for neutral lipid substrates than phospholipid substrates. In native LDL, preferentially hydrolyzes the phosphatidylcholine species containing polyunsaturated fatty acids at sn-2 position. The chain is Hepatic triacylglycerol lipase (LIPC) from Homo sapiens (Human).